We begin with the raw amino-acid sequence, 360 residues long: Aminomethyltransferase (360 aa).

Belongs to the GcvT family. In terms of assembly, the glycine cleavage system is composed of four proteins: P, T, L and H.

The enzyme catalyses N(6)-[(R)-S(8)-aminomethyldihydrolipoyl]-L-lysyl-[protein] + (6S)-5,6,7,8-tetrahydrofolate = N(6)-[(R)-dihydrolipoyl]-L-lysyl-[protein] + (6R)-5,10-methylene-5,6,7,8-tetrahydrofolate + NH4(+). The glycine cleavage system catalyzes the degradation of glycine. The polypeptide is Aminomethyltransferase (Legionella pneumophila (strain Lens)).